Consider the following 375-residue polypeptide: Dehydrodolichyl diphosphate synthase complex subunit NUS1 (375 aa).

A compositionally biased stretch (basic and acidic residues) spans 1 to 28 (MPTMIKKDDKAMEPPNEKPHRKIERDDV). The disordered stretch occupies residues 1–48 (MPTMIKKDDKAMEPPNEKPHRKIERDDVPESSNHIPPPESGVLKGGKV). The chain crosses the membrane as a helical span at residues 97–119 (YLFYKFLLVLLYICFGLFRYGQY).

This sequence belongs to the UPP synthase family. As to quaternary structure, forms an active dehydrodolichyl diphosphate synthase complex with either SRT1 or RER2. Mg(2+) serves as cofactor.

The protein resides in the endoplasmic reticulum membrane. It is found in the lipid droplet. Its subcellular location is the nucleus membrane. It carries out the reaction n isopentenyl diphosphate + (2E,6E)-farnesyl diphosphate = a di-trans,poly-cis-polyprenyl diphosphate + n diphosphate. It functions in the pathway protein modification; protein glycosylation. With SRT1 or RER2, forms the dehydrodolichyl diphosphate synthase (DDS) complex, an essential component of the dolichol monophosphate (Dol-P) biosynthetic machinery. Adds multiple copies of isopentenyl pyrophosphate (IPP) to farnesyl pyrophosphate (FPP) to produce dehydrodolichyl diphosphate (Dedol-PP), a precursor of dolichol which is utilized as a sugar carrier in protein glycosylation in the endoplasmic reticulum (ER). The sequence is that of Dehydrodolichyl diphosphate synthase complex subunit NUS1 (NUS1) from Saccharomyces cerevisiae (strain ATCC 204508 / S288c) (Baker's yeast).